A 271-amino-acid polypeptide reads, in one-letter code: MLGLKEKICLYGFNNLTKTLSFNIYDICYAKTEREKEDYIKYIDEQYNSERLTKILCDVTEMIGAHVLNISKQDYEPQGASVNVLITEEALPVALIDPSCNKGELSYLELRDSVVGHLDKSHLTVHTYPEFHPNNDIISFRVDIDVSTCGKISPLNALDYLIGSFDSDVITIDYRVRGFTRDVDGRKCYIDHDIKSIQDYIDGETLKKYDAMDVNVYQSNIFHTKMMLKDIVLNNYLFNSDPYELSPNDRREIRDRISKEMIEIYGGVNIY.

Serine 121 functions as the Schiff-base intermediate with substrate; via pyruvic acid in the catalytic mechanism. Serine 121 carries the pyruvic acid (Ser); by autocatalysis modification. The Proton acceptor; for processing activity role is filled by histidine 126. The active-site Proton donor; for catalytic activity is cysteine 149.

It belongs to the prokaryotic AdoMetDC family. Type 2 subfamily. As to quaternary structure, heterooctamer of four alpha and four beta chains arranged as a tetramer of alpha/beta heterodimers. Pyruvate serves as cofactor. In terms of processing, is synthesized initially as an inactive proenzyme. Formation of the active enzyme involves a self-maturation process in which the active site pyruvoyl group is generated from an internal serine residue via an autocatalytic post-translational modification. Two non-identical subunits are generated from the proenzyme in this reaction, and the pyruvate is formed at the N-terminus of the alpha chain, which is derived from the carboxyl end of the proenzyme. The post-translation cleavage follows an unusual pathway, termed non-hydrolytic serinolysis, in which the side chain hydroxyl group of the serine supplies its oxygen atom to form the C-terminus of the beta chain, while the remainder of the serine residue undergoes an oxidative deamination to produce ammonia and the pyruvoyl group blocking the N-terminus of the alpha chain.

It catalyses the reaction S-adenosyl-L-methionine + H(+) = S-adenosyl 3-(methylsulfanyl)propylamine + CO2. It participates in amine and polyamine biosynthesis; S-adenosylmethioninamine biosynthesis; S-adenosylmethioninamine from S-adenosyl-L-methionine: step 1/1. In terms of biological role, catalyzes the decarboxylation of S-adenosylmethionine to S-adenosylmethioninamine (dcAdoMet), the propylamine donor required for the synthesis of the polyamines spermine and spermidine from the diamine putrescine. This chain is S-adenosylmethionine decarboxylase proenzyme, found in Clostridium perfringens (strain ATCC 13124 / DSM 756 / JCM 1290 / NCIMB 6125 / NCTC 8237 / Type A).